A 286-amino-acid chain; its full sequence is Beta-lactamase SHV-8 (286 aa).

The signal sequence occupies residues 1-21; sequence MRYIRLCIISLLATLPLAVHA. The active-site Acyl-ester intermediate is Ser66. Cys73 and Cys119 are joined by a disulfide. Glu164 acts as the Proton acceptor in catalysis. Residue 230 to 232 coordinates substrate; sequence KTG.

Belongs to the class-A beta-lactamase family.

The catalysed reaction is a beta-lactam + H2O = a substituted beta-amino acid. In terms of biological role, SHV enzymes hydrolyze broad spectrum cephalosporins notably cefotaxime and ceftazidime. The chain is Beta-lactamase SHV-8 (bla) from Escherichia coli.